The chain runs to 639 residues: UPF0313 protein CLJ_B0249 (639 aa).

The Radical SAM core domain maps to 295-566 (AIKEVKFSIT…RMQRSLLQFS (272 aa)). Residues Cys-309, Cys-313, and Cys-316 each coordinate [4Fe-4S] cluster. The disordered stretch occupies residues 597-639 (YNKPYKKSHKKNNAKNKNNNYNKNKDVSKKNKKNSLSKHKKRK). 2 stretches are compositionally biased toward basic residues: residues 600 to 610 (PYKKSHKKNNA) and 626 to 639 (KNKK…KKRK).

Belongs to the UPF0313 family. Requires [4Fe-4S] cluster as cofactor.

This Clostridium botulinum (strain 657 / Type Ba4) protein is UPF0313 protein CLJ_B0249.